The following is a 750-amino-acid chain: Glutathione biosynthesis bifunctional protein GshAB (750 aa).

The segment at 1-333 (MIIDRLLQRS…EANRLNDLIA (333 aa)) is glutamate--cysteine ligase. Residues 32–51 (QPTQRVAQTPHPKTLGSRNY) form a disordered region. Residues 489 to 747 (KKILDEKHFP…ITPRILAKLF (259 aa)) form the ATP-grasp domain. 516–574 (SQIQDKPIVVKPKSTNFGLGISIFKTSANLASYEKAIDIAFTEDSAILVEEYIEGTEYR) is a binding site for ATP. The Mg(2+) site is built by aspartate 696, glutamate 717, and asparagine 719. Residues aspartate 696, glutamate 717, and asparagine 719 each contribute to the Mn(2+) site.

The protein in the N-terminal section; belongs to the glutamate--cysteine ligase type 1 family. Type 2 subfamily. Monomer. Requires Mg(2+) as cofactor. It depends on Mn(2+) as a cofactor.

The enzyme catalyses L-cysteine + L-glutamate + ATP = gamma-L-glutamyl-L-cysteine + ADP + phosphate + H(+). The catalysed reaction is gamma-L-glutamyl-L-cysteine + glycine + ATP = glutathione + ADP + phosphate + H(+). It participates in sulfur metabolism; glutathione biosynthesis; glutathione from L-cysteine and L-glutamate: step 1/2. Its pathway is sulfur metabolism; glutathione biosynthesis; glutathione from L-cysteine and L-glutamate: step 2/2. Functionally, synthesizes glutathione from L-glutamate and L-cysteine via gamma-L-glutamyl-L-cysteine. The chain is Glutathione biosynthesis bifunctional protein GshAB from Streptococcus agalactiae serotype III (strain NEM316).